Reading from the N-terminus, the 470-residue chain is Uronate isomerase (470 aa).

This sequence belongs to the metallo-dependent hydrolases superfamily. Uronate isomerase family.

It carries out the reaction D-glucuronate = D-fructuronate. The catalysed reaction is aldehydo-D-galacturonate = keto-D-tagaturonate. It participates in carbohydrate metabolism; pentose and glucuronate interconversion. The protein is Uronate isomerase of Salmonella agona (strain SL483).